The chain runs to 257 residues: Uridylate kinase (257 aa).

8–11 (KLSG) contacts ATP. The segment at 21 to 26 (GSAGFG) is involved in allosteric activation by GTP. A UMP-binding site is contributed by Gly56. The ATP site is built by Gly57 and Arg61. UMP-binding positions include Asp75 and 136-143 (NGAPFFTT). The ATP site is built by Asn164, Tyr170, and Asp173.

Belongs to the UMP kinase family. Homohexamer.

The protein resides in the cytoplasm. It catalyses the reaction UMP + ATP = UDP + ADP. The protein operates within pyrimidine metabolism; CTP biosynthesis via de novo pathway; UDP from UMP (UMPK route): step 1/1. Its activity is regulated as follows. Allosterically activated by GTP. Inhibited by UTP. Catalyzes the reversible phosphorylation of UMP to UDP. The sequence is that of Uridylate kinase from Deinococcus geothermalis (strain DSM 11300 / CIP 105573 / AG-3a).